Here is a 488-residue protein sequence, read N- to C-terminus: MIDFDGLSNAFSGQTVLCVGDLMLDEFVYGEISRISPEAPAPVIAVQRSETNVGGAGNVARNIAALGARCIFVGLAGEDDAGARLRDTLSRERLIEPLLISDPARSTTRKVRFVSEHFSTHMLRADWETLAPASGEVEQALIDAILPQLPCADIVLLSDYAKGVLTTRVIRSVIDGARRLGKRVIVDPKSADFGIYRGATLLTPNSKEFTDATGRRADDQASLAKAARDLMRIAECEALLVTQSERGMTLVPGEGEVIHVPAHTVKVRDVTGAGDTVVATLAVSLAAGADWEAALRTASAAAAVAVAKSGTAIVTLAELRRNILPPASLAAEEKIARSAGDLDQHLTAWREQGLRIGFTNGCFDILHPGHVKVLTGARAACDRLIVGLNSDASVKRLKGEGRPIQNERARAEVLAALEAVDLVAIFEEDTPLNLIGRIQPNVLVKGGDYSLEQVVGQELVTARGGEVILIDILQGFSTTSLVKRAGGA.

The segment at 1–330 (MIDFDGLSNA…RNILPPASLA (330 aa)) is ribokinase. 205-208 (NSKE) is a binding site for ATP. The active site involves D275. The segment at 358–488 (FTNGCFDILH…TSLVKRAGGA (131 aa)) is cytidylyltransferase.

In the N-terminal section; belongs to the carbohydrate kinase PfkB family. This sequence in the C-terminal section; belongs to the cytidylyltransferase family. In terms of assembly, homodimer.

The catalysed reaction is D-glycero-beta-D-manno-heptose 7-phosphate + ATP = D-glycero-beta-D-manno-heptose 1,7-bisphosphate + ADP + H(+). It catalyses the reaction D-glycero-beta-D-manno-heptose 1-phosphate + ATP + H(+) = ADP-D-glycero-beta-D-manno-heptose + diphosphate. The protein operates within nucleotide-sugar biosynthesis; ADP-L-glycero-beta-D-manno-heptose biosynthesis; ADP-L-glycero-beta-D-manno-heptose from D-glycero-beta-D-manno-heptose 7-phosphate: step 1/4. It functions in the pathway nucleotide-sugar biosynthesis; ADP-L-glycero-beta-D-manno-heptose biosynthesis; ADP-L-glycero-beta-D-manno-heptose from D-glycero-beta-D-manno-heptose 7-phosphate: step 3/4. Catalyzes the phosphorylation of D-glycero-D-manno-heptose 7-phosphate at the C-1 position to selectively form D-glycero-beta-D-manno-heptose-1,7-bisphosphate. Functionally, catalyzes the ADP transfer from ATP to D-glycero-beta-D-manno-heptose 1-phosphate, yielding ADP-D-glycero-beta-D-manno-heptose. This is Bifunctional protein HldE from Nitrobacter winogradskyi (strain ATCC 25391 / DSM 10237 / CIP 104748 / NCIMB 11846 / Nb-255).